The following is a 204-amino-acid chain: Anthranilate synthase component 2 (204 aa).

Positions 13 to 204 (RVLVVDNYDS…KNFLEDPWTR (192 aa)) constitute a Glutamine amidotransferase type-1 domain. An L-glutamine-binding site is contributed by 64 to 66 (GPC). Cysteine 91 serves as the catalytic Nucleophile; for GATase activity. L-glutamine-binding positions include glutamine 95 and 141–142 (SL). Catalysis depends on for GATase activity residues histidine 181 and glutamate 183.

As to quaternary structure, heterotetramer consisting of two non-identical subunits: a beta subunit (TrpG) and a large alpha subunit (TrpE).

It catalyses the reaction chorismate + L-glutamine = anthranilate + pyruvate + L-glutamate + H(+). It participates in amino-acid biosynthesis; L-tryptophan biosynthesis; L-tryptophan from chorismate: step 1/5. In terms of biological role, part of a heterotetrameric complex that catalyzes the two-step biosynthesis of anthranilate, an intermediate in the biosynthesis of L-tryptophan. In the first step, the glutamine-binding beta subunit (TrpG) of anthranilate synthase (AS) provides the glutamine amidotransferase activity which generates ammonia as a substrate that, along with chorismate, is used in the second step, catalyzed by the large alpha subunit of AS (TrpE) to produce anthranilate. In the absence of TrpG, TrpE can synthesize anthranilate directly from chorismate and high concentrations of ammonia. The protein is Anthranilate synthase component 2 (trpG) of Thermus thermophilus (strain ATCC 27634 / DSM 579 / HB8).